Reading from the N-terminus, the 199-residue chain is Golgi to ER traffic protein 1 (199 aa).

Residues 1-11 are Lumenal-facing; sequence MLLPDLHPYTI. The helical transmembrane segment at 12-31 threads the bilayer; it reads LLSIFLVLVVKQLVATIGKS. The Cytoplasmic portion of the chain corresponds to 32 to 115; it reads TIQEFVWLVY…SIDKASNALI (84 aa). A coiled-coil region spans residues 76–116; the sequence is YAKWTKLNRQADKLSAELQKLNQEIQQQKSSIDKASNALIL. A helical membrane pass occupies residues 116–136; that stretch reads LVLTTLPIWIARVFYRKTHLF. The Lumenal segment spans residues 137 to 160; the sequence is YIRQGIFPKYVEWVLALPFLPNGA. The chain crosses the membrane as a helical span at residues 161–177; that stretch reads VGLTIWMFAVNSVVSNF. Residues 178–199 are Cytoplasmic-facing; the sequence is SFLVSFPFAKRVSKPVRDTKVE.

It belongs to the WRB/GET1 family. Component of the Golgi to ER traffic (GET) complex, which is composed of GET1, GET2 and GET3. Within the complex, GET1 and GET2 form a heterotetramer which is stabilized by phosphatidylinositol binding and which binds to the GET3 homodimer.

The protein resides in the endoplasmic reticulum membrane. Its subcellular location is the golgi apparatus membrane. Functionally, required for the post-translational delivery of tail-anchored (TA) proteins to the endoplasmic reticulum. Together with GET2, acts as a membrane receptor for soluble GET3, which recognizes and selectively binds the transmembrane domain of TA proteins in the cytosol. The GET complex cooperates with the HDEL receptor ERD2 to mediate the ATP-dependent retrieval of resident ER proteins that contain a C-terminal H-D-E-L retention signal from the Golgi to the ER. This chain is Golgi to ER traffic protein 1, found in Candida albicans (strain WO-1) (Yeast).